Here is a 295-residue protein sequence, read N- to C-terminus: Pyridoxal 5'-phosphate synthase subunit PdxS (295 aa).

D-ribose 5-phosphate is bound at residue Asp-25. The Schiff-base intermediate with D-ribose 5-phosphate role is filled by Lys-82. Gly-154 contacts D-ribose 5-phosphate. Arg-166 contributes to the D-glyceraldehyde 3-phosphate binding site. D-ribose 5-phosphate is bound by residues Gly-215 and 236 to 237; that span reads GS.

Belongs to the PdxS/SNZ family. As to quaternary structure, in the presence of PdxT, forms a dodecamer of heterodimers.

It carries out the reaction aldehydo-D-ribose 5-phosphate + D-glyceraldehyde 3-phosphate + L-glutamine = pyridoxal 5'-phosphate + L-glutamate + phosphate + 3 H2O + H(+). It participates in cofactor biosynthesis; pyridoxal 5'-phosphate biosynthesis. In terms of biological role, catalyzes the formation of pyridoxal 5'-phosphate from ribose 5-phosphate (RBP), glyceraldehyde 3-phosphate (G3P) and ammonia. The ammonia is provided by the PdxT subunit. Can also use ribulose 5-phosphate and dihydroxyacetone phosphate as substrates, resulting from enzyme-catalyzed isomerization of RBP and G3P, respectively. In Staphylococcus aureus (strain Mu3 / ATCC 700698), this protein is Pyridoxal 5'-phosphate synthase subunit PdxS.